A 2556-amino-acid chain; its full sequence is Non-reducing polyketide synthase tazA (2556 aa).

Positions 16 to 270 are N-terminal acylcarrier protein transacylase domain (SAT); the sequence is LFGPQALSFT…QAIGLRGRFH (255 aa). The active-site Nucleophile; for transacylase activity is cysteine 143. Histidine 270 serves as the catalytic Proton donor/acceptor; for transacylase activity. Residues 397-769 enclose the Ketosynthase family 3 (KS3) domain; sequence EDEIAVIGMA…GSNASMIVTQ (373 aa). Positions 876–1209 are malonyl-CoA:ACP transacylase (MAT) domain; sequence CFGGQISRFV…WAHHCTQAPA (334 aa). The tract at residues 1254–1383 is N-terminal hotdog fold; that stretch reads YTFVGYQDEG…GQIIFQSAAE (130 aa). One can recognise a PKS/mFAS DH domain in the interval 1254 to 1560; sequence YTFVGYQDEG…YSRLPKSTMS (307 aa). The segment at 1257-1564 is product template (PT) domain; the sequence is VGYQDEGKRQ…PKSTMSKMLT (308 aa). Histidine 1285 functions as the Proton acceptor; for dehydratase activity in the catalytic mechanism. The tract at residues 1408-1560 is C-terminal hotdog fold; the sequence is DPDDVLQGRN…YSRLPKSTMS (153 aa). The active-site Proton donor; for dehydratase activity is the aspartate 1465. The segment at 1567-1621 is disordered; the sequence is TAPSERRAQVDSPSMPASINAPPSASEQAPVEPAPQTKESAPIAEPGAGGQSNSK. Residues 1577 to 1593 are compositionally biased toward polar residues; that stretch reads DSPSMPASINAPPSASE. In terms of domain architecture, Carrier spans 1620–1694; the sequence is SKVPGIVVEV…DVVQCVHKTL (75 aa). O-(pantetheine 4'-phosphoryl)serine is present on serine 1654. The segment at 1700-1731 is disordered; it reads SAAQESEGNLTPASSGTQSPRSDPVSDTSLSD. The span at 1702–1731 shows a compositional bias: polar residues; it reads AQESEGNLTPASSGTQSPRSDPVSDTSLSD. The tract at residues 1830–2107 is methyltransferase domain; the sequence is LEHEGRLIDI…DWTDGHLAEN (278 aa). The tract at residues 2180–2424 is NADPH-binding (R) domain; that stretch reads VTGATGSLGA…WTPVDVVAST (245 aa).

Pantetheine 4'-phosphate is required as a cofactor.

Its pathway is secondary metabolite biosynthesis. Functionally, non-reducing polyketide synthase; part of the gene cluster that mediates the biosynthesis of azaterrilone A and other azaphilones, a class of fungal metabolites characterized by a highly oxygenated pyrano-quinone bicyclic core and exhibiting a broad range of bioactivities. The first step of the pathway begins with tazA that assembles one acetyl-CoA starter unit, five malonyl-CoA units, and catalyzes a series of Claisen condensations, methylation, PT-mediated cyclization, and finally releases the first hexaketide precursor through the R-domain. The tazA product then undergoes reduction on its terminal ketone and the following pyran-ring formation by yet undetermined enzyme(s). Dehydration and enoyl reduction, possibly involving the trans-enoyl reductase tazE leads to the next intermediate. TazD is predicted as an acetyltransferase and might catalyze the acetylation steps leading to the synthesis of azaterrilone A. Azaterrilone A is not the final product of the taz pathway and both the highly reducing polyketide synthase tazB and the dual enzyme tazHJ catalyze late steps of the pathway, leading to the production of the 2 final stereoisomers that contain additional polyketide modification whose structures have still to be determined. The sequence is that of Non-reducing polyketide synthase tazA from Aspergillus terreus (strain NIH 2624 / FGSC A1156).